A 452-amino-acid chain; its full sequence is MYRQLVNILTALFAFFLGTNHFREAFCKDHDSRSGKHPSQTLSPSDFLDKLMGRTSGYDARIRPNFKGPPVNVTCNIFINSFGSVTETTMDYRVNIFLRQQWNDSRLAYSEYPDDSLDLDPSMLDSIWKPDLFFANEKGANFHDVTTDNKLLRISKNGKVLYSIRLTLTLSCPMDLKNFPMDVQTCTMQLESFGYTMNDLIFEWLSDGPVQVAEGLTLPQFILKEEKELGYCTKHYNTGKFTCIEVKFHLERQMGYYLIQMYIPSLLIVILSWVSFWINMDAAPARVALGITTVLTMTTQSSGSRASLPKVSYVKAIDIWMAVCLLFVFAALLEYAAVNFVSRQHKEFLRLRRRQKRQNKEEDVTRESRFNFSGYGMGHCLQMKDGTAVKATPANPLPQPPKDADAIKKKFVDRAKRIDTISRAAFPLAFLIFNIFYWITYKIIRHEDVHKK.

An N-terminal signal peptide occupies residues 1–27 (MYRQLVNILTALFAFFLGTNHFREAFC). The Extracellular segment spans residues 28–256 (KDHDSRSGKH…KFHLERQMGY (229 aa)). The N-linked (GlcNAc...) asparagine glycan is linked to Asn72. Arg99 serves as a coordination point for glycine. Residue Arg99 participates in strychnine binding. Asn103 carries an N-linked (GlcNAc...) asparagine glycan. Ser163 is a binding site for glycine. A disulfide bond links Cys172 and Cys186. Positions 226 and 228 each coordinate Zn(2+). Cys232 and Cys243 are oxidised to a cystine. Thr238 contacts glycine. Position 249 (His249) interacts with Zn(2+). Residues 257 to 278 (YLIQMYIPSLLIVILSWVSFWI) traverse the membrane as a helical segment. Over 279–283 (NMDAA) the chain is Cytoplasmic. Residues 284–304 (PARVALGITTVLTMTTQSSGS) traverse the membrane as a helical segment. The Extracellular segment spans residues 305 to 315 (RASLPKVSYVK). A helical membrane pass occupies residues 316-336 (AIDIWMAVCLLFVFAALLEYA). Topologically, residues 337 to 420 (AVNFVSRQHK…FVDRAKRIDT (84 aa)) are cytoplasmic. Residues 421–441 (ISRAAFPLAFLIFNIFYWITY) form a helical membrane-spanning segment. The Extracellular portion of the chain corresponds to 442–452 (KIIRHEDVHKK).

The protein belongs to the ligand-gated ion channel (TC 1.A.9) family. Glycine receptor (TC 1.A.9.3) subfamily. GLRA2 sub-subfamily. Interacts with GLRB. Heteropentamer composed of GLRA2 and GLRB; functional GLRB-GLRA2 heteropentamers contain four GLRA2 subunits and one GLRB subunit, although alternative subunit composition cannot be excluded. Homopentamer (in vitro). Both homopentamers and heteropentamers form functional ion channels, but their characteristics are subtly different. As to expression, detected in the retina inner plexiform layer (at protein level). Detected in neonate retina. Detected in brain. Detected in spinal cord, with higher levels in the dorsal horn.

It is found in the postsynaptic cell membrane. Its subcellular location is the synapse. The protein localises to the cell membrane. It localises to the cell projection. It carries out the reaction chloride(in) = chloride(out). Its activity is regulated as follows. Channel opening is triggered by extracellular glycine. Channel opening is also triggered by taurine and beta-alanine. Inhibited by strychnine. Inhibited by picrotoxin. Functionally, subunit of heteromeric glycine-gated chloride channels. Plays a role in synaptic plasticity. Contributes to the generation of inhibitory postsynaptic currents, and is involved in the down-regulation of neuronal excitability. Plays a role in cellular responses to ethanol. The polypeptide is Glycine receptor subunit alpha-2 (Mus musculus (Mouse)).